The sequence spans 105 residues: Large ribosomal subunit protein bL21 (105 aa).

It belongs to the bacterial ribosomal protein bL21 family. As to quaternary structure, part of the 50S ribosomal subunit. Contacts protein L20.

In terms of biological role, this protein binds to 23S rRNA in the presence of protein L20. The protein is Large ribosomal subunit protein bL21 of Dictyoglomus thermophilum (strain ATCC 35947 / DSM 3960 / H-6-12).